We begin with the raw amino-acid sequence, 867 residues long: Prominin-1 (867 aa).

A signal peptide spans 1–19; sequence MALVFSALLLLGLCGKISS. The Extracellular portion of the chain corresponds to 20–107; it reads EGQPAFHNTP…VLALKIALYE (88 aa). The helical transmembrane segment at 108–128 threads the bilayer; it reads IGVLICAILGLLFIILMPLVG. Over 129-158 the chain is Cytoplasmic; the sequence is CFFCMCRCCNKCGGEMHQRQKQNAPCRRKC. A helical transmembrane segment spans residues 159 to 179; sequence LGLSLLVICLLMSLGIIYGFV. At 180–434 the chain is on the extracellular side; the sequence is ANQQTRTRIK…LPKLEEYDSY (255 aa). An N6-acetyllysine mark is found at Lys-226, Lys-258, and Lys-265. N-linked (GlcNAc...) asparagine glycosylation is found at Asn-273, Asn-291, Asn-332, Asn-374, and Asn-415. A helical membrane pass occupies residues 435 to 455; that stretch reads WWLGGLIVCFLLTLIVTFFFL. Topologically, residues 456–487 are cytoplasmic; it reads GLLCGVFGYDKHATPTRRGCVSNTGGIFLMAG. The helical transmembrane segment at 488 to 508 threads the bilayer; it reads VGFGFLFCWILMILVVLTFVV. At 509 to 794 the chain is on the extracellular side; that stretch reads GANVEKLLCE…LCGYVADPLN (286 aa). 3 N-linked (GlcNAc...) asparagine glycosylation sites follow: Asn-554, Asn-581, and Asn-732. A helical membrane pass occupies residues 795 to 815; sequence LFWFGIGKATVLLLPAVIIAI. The Cytoplasmic segment spans residues 816-867; that stretch reads KLAKYYRRMDSEDVYDDVETVPMKNLEIGSNGYHKDHLYGVHNPVMTSPSRY. Ser-865 carries the post-translational modification Phosphoserine.

It belongs to the prominin family. Interacts with CDHR1 and with actin filaments. Interacts with NAT8 and NAT8B. Post-translationally, acetylation at Lys-226, Lys-258 and Lys-265 by NAT8 and NAT8B may control PROM1 protein expression and its function in cell apoptosis. In the submandibular gland, expressed on the apical side of epithelial cells. In the parotid gland, expressed in the intercalated ducts. In the sublingual gland, expressed in intercalated ducts. In the extraorbital lacrimal gland, expressed in the intercalated tubules and larger intralobular ducts. Expressed in the retina. Present in urine within small membrane particles (at protein level). In the embryo, expressed on the apical side of neuroepithelial cells and of other epithelia such as lung buds, gut and ureter buds. In the adult, expressed at the apical side of the kidney tubules and of the ependymal layer of the brain. Not expressed in gut, liver, lung, pituitary, adrenal, heart or spleen. Localized to the nascent disk membranes at the base of the rod outer segment in the retina (at protein level).

It is found in the apical cell membrane. The protein localises to the cell projection. The protein resides in the microvillus membrane. Its subcellular location is the cilium. It localises to the photoreceptor outer segment. It is found in the endoplasmic reticulum. The protein localises to the endoplasmic reticulum-Golgi intermediate compartment. Functionally, may play a role in cell differentiation, proliferation and apoptosis. Binds cholesterol in cholesterol-containing plasma membrane microdomains and may play a role in the organization of the apical plasma membrane in epithelial cells. During early retinal development acts as a key regulator of disk morphogenesis. Involved in regulation of MAPK and Akt signaling pathways. In neuroblastoma cells suppresses cell differentiation such as neurite outgrowth in a RET-dependent manner. This is Prominin-1 (Prom1) from Mus musculus (Mouse).